Reading from the N-terminus, the 798-residue chain is Metabotropic glutamate receptor-like protein A (798 aa).

The signal sequence occupies residues 1 to 23 (MNKLKFLIILFITFLFNLKYINS). The Extracellular portion of the chain corresponds to 24-388 (LKQCKISVLL…DYSNSMKLGL (365 aa)). Asn186, Asn275, and Asn320 each carry an N-linked (GlcNAc...) asparagine glycan. A helical transmembrane segment spans residues 389 to 409 (TIVSGFCILFCIISMVLVIMF). Over 410–419 (RHAKIIKSAS) the chain is Cytoplasmic. The helical transmembrane segment at 420–440 (PIFCLLILFGCIIIFSGCIIF) threads the bilayer. At 441 to 447 (SLSPTDG) the chain is on the extracellular side. The helical transmembrane segment at 448–468 (ICGARVWLLSIGYTIFLGSLL) threads the bilayer. At 469–494 (VKNWRIWLLFDNPKLKKRSITNWKLY) the chain is on the cytoplasmic side. A helical membrane pass occupies residues 495–515 (PFVAGILAADVLILALWQGLG). Residues 516 to 545 (DIRSESRIGIDSLTKYQYANVCSSNDQGSV) lie on the Extracellular side of the membrane. Residues 546–566 (ALYILLVFHGIKLLAACFISF) form a helical membrane-spanning segment. Over 567-580 (KIKAVDIEEFNESK) the chain is Cytoplasmic. A helical membrane pass occupies residues 581–601 (PIASSIYIITFCLFIVIPLMV). Over 602–609 (SPQSVASQ) the chain is Extracellular. A helical membrane pass occupies residues 610–630 (VITIVVCAIVTTLISISLLFG). Topologically, residues 631 to 798 (SKFYMMATQG…NQSEIDPDDV (168 aa)) are cytoplasmic. Residues 714–771 (AEQDSKLDLENQNDENEIENNQNNQNNIVEDCQKVEKLEKDENLEKDENLEKDENLEK) are a coiled coil. Basic and acidic residues predominate over residues 752–774 (EKDENLEKDENLEKDENLEKDNE). Positions 752-798 (EKDENLEKDENLEKDENLEKDNENQSIIQKKRLSKNFNQSEIDPDDV) are disordered.

The protein in the N-terminal section; belongs to the BMP lipoprotein family. In the C-terminal section; belongs to the G-protein coupled receptor 3 family. GABA-B receptor subfamily.

It localises to the membrane. The protein resides in the cytoplasm. Its subcellular location is the cell cortex. The protein localises to the perinuclear region. In terms of biological role, may play an important role in the terminal differentiation. The protein is Metabotropic glutamate receptor-like protein A (grlA) of Dictyostelium discoideum (Social amoeba).